The following is a 142-amino-acid chain: MKTFVAKPAEVKRDWFVVDAEGKTLGRLATEIALRLRGKHKAEYTPHVDTGDYIIVINAEKITVTGNKAKGKIYYHHTGFIGGIKAISFEDLIKRAPERVIEKAVKGMLPRGPLGRAMYRKLKVYAGTEHQHSAQQPQVLDI.

This sequence belongs to the universal ribosomal protein uL13 family. As to quaternary structure, part of the 50S ribosomal subunit.

In terms of biological role, this protein is one of the early assembly proteins of the 50S ribosomal subunit, although it is not seen to bind rRNA by itself. It is important during the early stages of 50S assembly. In Psychromonas ingrahamii (strain DSM 17664 / CCUG 51855 / 37), this protein is Large ribosomal subunit protein uL13.